The chain runs to 345 residues: L-threonine 3-dehydrogenase (345 aa).

Residue C42 participates in Zn(2+) binding. Residues T44 and H47 each act as charge relay system in the active site. Zn(2+) contacts are provided by H67, E68, C97, C100, C103, and C111. NAD(+)-binding positions include I179, D199, R204, 266–268, and 290–291; these read LGI and IY.

It belongs to the zinc-containing alcohol dehydrogenase family. In terms of assembly, homotetramer. Requires Zn(2+) as cofactor.

It is found in the cytoplasm. The catalysed reaction is L-threonine + NAD(+) = (2S)-2-amino-3-oxobutanoate + NADH + H(+). Its pathway is amino-acid degradation; L-threonine degradation via oxydo-reductase pathway; glycine from L-threonine: step 1/2. Functionally, catalyzes the NAD(+)-dependent oxidation of L-threonine to 2-amino-3-ketobutyrate. The chain is L-threonine 3-dehydrogenase from Rhizobium rhizogenes (strain K84 / ATCC BAA-868) (Agrobacterium radiobacter).